The following is a 511-amino-acid chain: V-type proton ATPase subunit B, brain isoform (511 aa).

Arg-400 provides a ligand contact to ATP.

It belongs to the ATPase alpha/beta chains family. As to quaternary structure, V-ATPase is a heteromultimeric enzyme made up of two complexes: the ATP-hydrolytic V1 complex and the proton translocation V0 complex. The V1 complex consists of three catalytic AB heterodimers that form a heterohexamer, three peripheral stalks each consisting of EG heterodimers, one central rotor including subunits D and F, and the regulatory subunits C and H. The proton translocation complex V0 consists of the proton transport subunit a, a ring of proteolipid subunits c9c'', rotary subunit d, subunits e and f, and the accessory subunits ATP6AP1/Ac45 and ATP6AP2/PRR. As to expression, kidney; localizes to early distal nephron, encompassing thick ascending limbs and distal convoluted tubules (at protein level).

It is found in the apical cell membrane. It localises to the melanosome. Its subcellular location is the cytoplasm. The protein localises to the cytoplasmic vesicle. The protein resides in the secretory vesicle. It is found in the synaptic vesicle membrane. It localises to the clathrin-coated vesicle membrane. In terms of biological role, non-catalytic subunit of the V1 complex of vacuolar(H+)-ATPase (V-ATPase), a multisubunit enzyme composed of a peripheral complex (V1) that hydrolyzes ATP and a membrane integral complex (V0) that translocates protons. V-ATPase is responsible for acidifying and maintaining the pH of intracellular compartments and in some cell types, is targeted to the plasma membrane, where it is responsible for acidifying the extracellular environment. In renal intercalated cells, can partially compensate the lack of ATP6V1B1 and mediate secretion of protons (H+) into the urine under base-line conditions but not in conditions of acid load. The chain is V-type proton ATPase subunit B, brain isoform (ATP6V1B2) from Homo sapiens (Human).